Reading from the N-terminus, the 342-residue chain is AA9 family lytic polysaccharide monooxygenase AA9-X282 (342 aa).

The N-terminal stretch at 1–18 (MKSFASLLFLAATAAAHA) is a signal peptide. His17 contacts Cu(2+). Phosphothreonine is present on residues Thr19 and Thr57. Phosphoserine is present on Ser59. Residues Cys63 and Cys181 are joined by a disulfide bond. A Cu(2+)-binding site is contributed by His93. O2-binding residues include His167 and Gln176. Tyr178 is a Cu(2+) binding site. The N-linked (GlcNAc...) asparagine glycan is linked to Asn189. An X282 extension region spans residues 233–263 (SPATVANTPYPTTATWNTALQPTTVPTVTPP). Residues 281–302 (VTSQPPVPPTTQQPPVVTPTAP) form a disordered region. The segment covering 285 to 302 (PPVPPTTQQPPVVTPTAP) has biased composition (pro residues). Positions 306–342 (PLQTQYGQCGGQGWNGPTQCQPPYTCTASNQWYHQCL) constitute a CBM1 domain.

It belongs to the polysaccharide monooxygenase AA9 family. The cofactor is Cu(2+).

It is found in the secreted. It catalyses the reaction [(1-&gt;4)-beta-D-glucosyl]n+m + reduced acceptor + O2 = 4-dehydro-beta-D-glucosyl-[(1-&gt;4)-beta-D-glucosyl]n-1 + [(1-&gt;4)-beta-D-glucosyl]m + acceptor + H2O.. Lytic polysaccharide monooxygenase (LPMO) that depolymerizes crystalline and amorphous polysaccharides via the oxidation of scissile alpha- or beta-(1-4)-glycosidic bonds, yielding C1 oxidation products. Catalysis by LPMOs requires the reduction of the active-site copper from Cu(II) to Cu(I) by a reducing agent and H(2)O(2) or O(2) as a cosubstrate. Shows only weak binding properties to cellulose, and low cellulolytic oxidative activity which questions the involvement of X282 extension-containing AA9 proteins in the degradation of plant cell wall and opens new avenues as to the divergence of function of some AA9 members. This is AA9 family lytic polysaccharide monooxygenase AA9-X282 from Coprinopsis cinerea (strain Okayama-7 / 130 / ATCC MYA-4618 / FGSC 9003) (Inky cap fungus).